Reading from the N-terminus, the 118-residue chain is Actin depolymerizing factor ADF (118 aa).

The ADF-H domain occupies 4–118; the sequence is GMGVDENCVA…HEMGDLAPLA (115 aa).

The protein belongs to the actin-binding proteins ADF family. In terms of assembly, interacts with ACT1 (G-actin); the interaction results in inhibition of actin polymerization. Interacts with DPA; the interaction enhances ADF activity in disassembly of filamentous actin and inhibition of actin polymerization.

It localises to the cytoplasm. In terms of biological role, inhibits actin polymerization. Promotes actin depolymerization. Strongly sequesters actin monomers (G-actin). Weakly severs actin filaments (F-actin). This Toxoplasma gondii protein is Actin depolymerizing factor ADF.